A 165-amino-acid chain; its full sequence is Pro-MCH (165 aa).

An N-terminal signal peptide occupies residues 1 to 21 (MAKMSLSSYLLILTFSLFSQG). Residues 68–88 (NDDSSFMNDEENKNSKNTGSK) are disordered. Isoleucine 143 is subject to Isoleucine amide. An intrachain disulfide couples cysteine 153 to cysteine 162.

This sequence belongs to the melanin-concentrating hormone family. In terms of processing, pro-MCH is processed differentially in the brain and in peripheral organs producing two neuropeptides; NEI and MCH. A third peptide, NGE, may also be produced. Preferential processing in neurons by prohormone convertase 2 (PC2) generates NEI. MCH is generated in neurons of the lateral hypothalmic area by several prohormone convertases including PC1/3, PC2 and PC5/6.

It localises to the secreted. In terms of biological role, MCH may act as a neurotransmitter or neuromodulator in a broad array of neuronal functions directed toward the regulation of goal-directed behavior, such as food intake, and general arousal. This chain is Pro-MCH (PMCH), found in Canis lupus familiaris (Dog).